The sequence spans 358 residues: Methylthioribose-1-phosphate isomerase (358 aa).

Residues R54 to A56, R96, and Q205 contribute to the substrate site. The active-site Proton donor is the D246. N256–K257 contacts substrate.

This sequence belongs to the eIF-2B alpha/beta/delta subunits family. MtnA subfamily.

The catalysed reaction is 5-(methylsulfanyl)-alpha-D-ribose 1-phosphate = 5-(methylsulfanyl)-D-ribulose 1-phosphate. It functions in the pathway amino-acid biosynthesis; L-methionine biosynthesis via salvage pathway; L-methionine from S-methyl-5-thio-alpha-D-ribose 1-phosphate: step 1/6. In terms of biological role, catalyzes the interconversion of methylthioribose-1-phosphate (MTR-1-P) into methylthioribulose-1-phosphate (MTRu-1-P). The sequence is that of Methylthioribose-1-phosphate isomerase from Ectopseudomonas mendocina (strain ymp) (Pseudomonas mendocina).